A 221-amino-acid chain; its full sequence is Deoxyribose-phosphate aldolase (221 aa).

Residue D89 is the Proton donor/acceptor of the active site. K151 functions as the Schiff-base intermediate with acetaldehyde in the catalytic mechanism. The Proton donor/acceptor role is filled by K180.

The protein belongs to the DeoC/FbaB aldolase family. DeoC type 1 subfamily.

Its subcellular location is the cytoplasm. The enzyme catalyses 2-deoxy-D-ribose 5-phosphate = D-glyceraldehyde 3-phosphate + acetaldehyde. The protein operates within carbohydrate degradation; 2-deoxy-D-ribose 1-phosphate degradation; D-glyceraldehyde 3-phosphate and acetaldehyde from 2-deoxy-alpha-D-ribose 1-phosphate: step 2/2. In terms of biological role, catalyzes a reversible aldol reaction between acetaldehyde and D-glyceraldehyde 3-phosphate to generate 2-deoxy-D-ribose 5-phosphate. This is Deoxyribose-phosphate aldolase from Mesomycoplasma hyopneumoniae (strain J / ATCC 25934 / NCTC 10110) (Mycoplasma hyopneumoniae).